Reading from the N-terminus, the 659-residue chain is MFGKLSLNSIPYHDPIIMITCCVVILVFLVISIIITIAQKWQYLWNEWCCTVDHKKIAKMYIFLAFIMLFRGFADAIMMRMQQFLVSSYHGNGTGFLPPHHYDQIFTAHGVIMIFFVAMPLVIGLMNFVVPLQIGSRDVAFPFLNNLSLWLTIFSALLMNVSLGIGEFAQTGWLAYPPLSELQYSPGVGVDYWIWSLQISGIGTTLTAINFLVTIIKMRSSGMNWFKIPVFTWTSFCTNILIIASFPVLTVSLLLLTLDRYLGFHFFTNDFGGNMMMYVNLIWIWGHPEVYILILPVFGIFSEVVATFSSKELFGYTSLIWATIVITILSFIVWLHHFFTMGASANVNAFFGITTMIISIPTGVKIFNWLFTMYRGNVRINSIMLWTIGFLITFSIGGMAGVLLSLPVIDFSLHNSLFLVAHFHNVIIGGVVFGCFAGITYWFPKLFGFMLSEKWGKRAFWCWFFGFFCAFMPLYALGLMGMTRRLSQNINPQFHSMLTIAALGTILIFIGIVFQIIQIFVSIRDRNLNRDCSGDPWNGRTLEWSTTSPPPFYNFAVLPIVQFRDSFWESKKSFKSNKLPILYTSFHMPKNTKFGFLIGFFAFLLGFSAVWYIFWLFFISFFVIIYLLVIKSLDTNCDYIISIEEIKEIEKCINIKKMD.

The Extracellular segment spans residues 1–14 (MFGKLSLNSIPYHD). Residues 15–35 (PIIMITCCVVILVFLVISIII) form a helical membrane-spanning segment. Residues 36-56 (TIAQKWQYLWNEWCCTVDHKK) lie on the Cytoplasmic side of the membrane. The helical transmembrane segment at 57 to 77 (IAKMYIFLAFIMLFRGFADAI) threads the bilayer. 3 residues coordinate a ubiquinone: R71, D75, and H101. Topologically, residues 78 to 109 (MMRMQQFLVSSYHGNGTGFLPPHHYDQIFTAH) are extracellular. A heme b-binding site is contributed by H109. The helical transmembrane segment at 110–130 (GVIMIFFVAMPLVIGLMNFVV) threads the bilayer. Residues 131–148 (PLQIGSRDVAFPFLNNLS) lie on the Cytoplasmic side of the membrane. Residues 149-169 (LWLTIFSALLMNVSLGIGEFA) traverse the membrane as a helical segment. The Extracellular segment spans residues 170–192 (QTGWLAYPPLSELQYSPGVGVDY). Position 173 (W173) interacts with heme b. The chain crosses the membrane as a helical span at residues 193 to 213 (WIWSLQISGIGTTLTAINFLV). The Cytoplasmic portion of the chain corresponds to 214–235 (TIIKMRSSGMNWFKIPVFTWTS). The chain crosses the membrane as a helical span at residues 236–256 (FCTNILIIASFPVLTVSLLLL). The Extracellular segment spans residues 257–280 (TLDRYLGFHFFTNDFGGNMMMYVN). The helical transmembrane segment at 281-301 (LIWIWGHPEVYILILPVFGIF) threads the bilayer. H287 contributes to the Cu(2+) binding site. Positions 287–291 (HPEVY) form a cross-link, 1'-histidyl-3'-tyrosine (His-Tyr). Y291 contacts Fe(II)-heme o. Residues 302-318 (SEVVATFSSKELFGYTS) are Cytoplasmic-facing. A helical transmembrane segment spans residues 319-339 (LIWATIVITILSFIVWLHHFF). H336 and H337 together coordinate Cu(2+). The Extracellular portion of the chain corresponds to 340–350 (TMGASANVNAF). A helical membrane pass occupies residues 351–371 (FGITTMIISIPTGVKIFNWLF). Residues 372–382 (TMYRGNVRINS) lie on the Cytoplasmic side of the membrane. The chain crosses the membrane as a helical span at residues 383-403 (IMLWTIGFLITFSIGGMAGVL). Residues 404–416 (LSLPVIDFSLHNS) are Extracellular-facing. Fe(II)-heme o-binding residues include H414 and H422. Residues 417–437 (LFLVAHFHNVIIGGVVFGCFA) form a helical membrane-spanning segment. Heme b is bound at residue H424. At 438 to 459 (GITYWFPKLFGFMLSEKWGKRA) the chain is on the cytoplasmic side. Residues 460–480 (FWCWFFGFFCAFMPLYALGLM) form a helical membrane-spanning segment. The Extracellular segment spans residues 481–499 (GMTRRLSQNINPQFHSMLT). Residues R484 and R485 each contribute to the heme b site. The helical transmembrane segment at 500 to 520 (IAALGTILIFIGIVFQIIQIF) threads the bilayer. The Cytoplasmic portion of the chain corresponds to 521–587 (VSIRDRNLNR…KLPILYTSFH (67 aa)). A helical transmembrane segment spans residues 588–608 (MPKNTKFGFLIGFFAFLLGFS). Position 609 (A609) is a topological domain, extracellular. Residues 610–630 (VWYIFWLFFISFFVIIYLLVI) traverse the membrane as a helical segment. Over 631 to 659 (KSLDTNCDYIISIEEIKEIEKCINIKKMD) the chain is Cytoplasmic.

Belongs to the heme-copper respiratory oxidase family. The cytochrome bo(3) ubiquinol oxidase complex is a heterooctamer of two A chains, two B chains, two C chains and two D chains. Cu(2+) is required as a cofactor. The cofactor is heme b. It depends on Fe(II)-heme o as a cofactor.

The protein localises to the cell membrane. It carries out the reaction 2 a ubiquinol + O2 + n H(+)(in) = 2 a ubiquinone + 2 H2O + n H(+)(out). In terms of biological role, cytochrome bo(3) ubiquinol oxidase is the terminal enzyme in the aerobic respiratory chain. Catalyzes the four-electron reduction of O2 to water, using a ubiquinol as a membrane soluble electron donor for molecular oxygen reduction. Has proton pump activity across the membrane in addition to electron transfer, pumping 2 protons/electron and generating a proton motive force. All the redox centers of this enzyme complex are located within the largest subunit, subunit I. Protons are probably pumped via D- and K- channels found in this subunit. The polypeptide is Cytochrome bo(3) ubiquinol oxidase subunit 1 (cyoB) (Buchnera aphidicola subsp. Baizongia pistaciae (strain Bp)).